Reading from the N-terminus, the 420-residue chain is Gamma-glutamyl phosphate reductase (420 aa).

This sequence belongs to the gamma-glutamyl phosphate reductase family.

Its subcellular location is the cytoplasm. It catalyses the reaction L-glutamate 5-semialdehyde + phosphate + NADP(+) = L-glutamyl 5-phosphate + NADPH + H(+). It participates in amino-acid biosynthesis; L-proline biosynthesis; L-glutamate 5-semialdehyde from L-glutamate: step 2/2. Its function is as follows. Catalyzes the NADPH-dependent reduction of L-glutamate 5-phosphate into L-glutamate 5-semialdehyde and phosphate. The product spontaneously undergoes cyclization to form 1-pyrroline-5-carboxylate. The polypeptide is Gamma-glutamyl phosphate reductase (Streptococcus pneumoniae serotype 4 (strain ATCC BAA-334 / TIGR4)).